Here is a 408-residue protein sequence, read N- to C-terminus: Homogentisate geranylgeranyltransferase (408 aa).

The N-terminal 68 residues, 1–68 (MQATTAAAAA…SAISQATSPR (68 aa)), are a transit peptide targeting the chloroplast. The next 9 helical transmembrane spans lie at 122-142 (HTIFGTIIGITSVSLLPMKSI), 149-169 (VLKGYLEALAAALCMNIYVVG), 194-214 (SVATGVFLVVTFLIMSFSIGI), 217-237 (GSVPLMYALVVSFLLGSAYSI), 248-268 (ALLAASCILFVRAILVQLAFF), 286-306 (LVFATLFMCCFSAVIALFKDI), 329-349 (VYQLCISILLTAYLAATVVGA), 352-372 (THLLQKIITVSGHGLLALTLW), and 386-406 (VTSFYMFIWKLFYAEYFLIPF).

Belongs to the UbiA prenyltransferase family.

Its subcellular location is the plastid. It is found in the chloroplast membrane. The catalysed reaction is homogentisate + (2E,6E,10E)-geranylgeranyl diphosphate + H(+) = 6-geranylgeranyl-2-methylbenzene-1,4-diol + CO2 + diphosphate. It functions in the pathway cofactor biosynthesis; tocopherol biosynthesis. Its function is as follows. Involved in the synthesis of tocotrienol (vitamin E). Catalyzes the condensation of homogentisate and geranylgeranyl diphosphate to form 2-methyl-6-geranylgeranylbenzoquinol. Possesses low activity with phytyl diphosphate as substrate. In Triticum aestivum (Wheat), this protein is Homogentisate geranylgeranyltransferase.